The primary structure comprises 253 residues: Phosphate import ATP-binding protein PstB (253 aa).

The region spanning 5 to 248 (IQVRDLNAYY…PSDKRTEDYI (244 aa)) is the ABC transporter domain. 37 to 44 (GPSGCGKS) lines the ATP pocket.

The protein belongs to the ABC transporter superfamily. Phosphate importer (TC 3.A.1.7) family. In terms of assembly, the complex is composed of two ATP-binding proteins (PstB), two transmembrane proteins (PstC and PstA) and a solute-binding protein (PstS).

It localises to the cell inner membrane. It carries out the reaction phosphate(out) + ATP + H2O = ADP + 2 phosphate(in) + H(+). In terms of biological role, part of the ABC transporter complex PstSACB involved in phosphate import. Responsible for energy coupling to the transport system. This Koribacter versatilis (strain Ellin345) protein is Phosphate import ATP-binding protein PstB.